The sequence spans 231 residues: Ribosomal RNA small subunit methyltransferase G (231 aa).

Gly-85, Phe-90, and Arg-154 together coordinate S-adenosyl-L-methionine.

The protein belongs to the methyltransferase superfamily. RNA methyltransferase RsmG family.

The protein resides in the cytoplasm. The catalysed reaction is guanosine(527) in 16S rRNA + S-adenosyl-L-methionine = N(7)-methylguanosine(527) in 16S rRNA + S-adenosyl-L-homocysteine. Specifically methylates the N7 position of guanine in position 527 of 16S rRNA. The chain is Ribosomal RNA small subunit methyltransferase G from Rhodopseudomonas palustris (strain BisA53).